Consider the following 342-residue polypeptide: Heat-inducible transcription repressor HrcA (342 aa).

The protein belongs to the HrcA family.

Its function is as follows. Negative regulator of class I heat shock genes (grpE-dnaK-dnaJ and groELS operons). Prevents heat-shock induction of these operons. The chain is Heat-inducible transcription repressor HrcA from Acholeplasma laidlawii.